Reading from the N-terminus, the 265-residue chain is MDLATIAFAFSLVLLSGLSTSIGGALAVGKREPGPKFMAAALGLSAGVMLYVSFMEILPEALKKLESTLGDEARATWTMMGAFFAGIAIITIIDRLVPEEINPHEPATTEEEARRKRLIKTGMFTAFALAIHNFPEGFATFLSGLEAPEIAIPVAVAIAIHNIPEGIAVAVPLRSATGSRKKAFWWATLSGLAEPLGALIGFALLMPFIGPMTFGISFAVIAGIMVFISLDELLPTAEETGEHHCAIYGLIAGMAVMAVSLALFI.

The next 8 membrane-spanning stretches (helical) occupy residues 6-26 (IAFAFSLVLLSGLSTSIGGAL), 37-57 (FMAAALGLSAGVMLYVSFMEI), 77-97 (WTMMGAFFAGIAIITIIDRLV), 122-142 (GMFTAFALAIHNFPEGFATFL), 150-170 (IAIPVAVAIAIHNIPEGIAVA), 184-204 (FWWATLSGLAEPLGALIGFAL), 208-228 (FIGPMTFGISFAVIAGIMVFI), and 245-265 (CAIYGLIAGMAVMAVSLALFI). Fe(2+) is bound by residues N133 and E136. E136 and H161 together coordinate Zn(2+). Residues N162, E165, and E194 each coordinate Fe(2+). E165 contributes to the Zn(2+) binding site.

It belongs to the ZIP transporter (TC 2.A.5) family. ZupT subfamily.

It is found in the cell membrane. It carries out the reaction Zn(2+)(in) = Zn(2+)(out). Mediates zinc uptake. May also transport other divalent cations. In Corynebacterium aurimucosum (strain ATCC 700975 / DSM 44827 / CIP 107346 / CN-1) (Corynebacterium nigricans), this protein is Zinc transporter ZupT.